The following is a 264-amino-acid chain: Thymidylate synthase (264 aa).

Arg21 lines the dUMP pocket. A (6R)-5,10-methylene-5,6,7,8-tetrahydrofolate-binding site is contributed by His51. 126–127 (RR) serves as a coordination point for dUMP. Residue Cys146 is the Nucleophile of the active site. Residues 166 to 169 (RSAD), Asn177, and 207 to 209 (HLY) each bind dUMP. Asp169 is a binding site for (6R)-5,10-methylene-5,6,7,8-tetrahydrofolate. Ala263 is a binding site for (6R)-5,10-methylene-5,6,7,8-tetrahydrofolate.

It belongs to the thymidylate synthase family. Bacterial-type ThyA subfamily. Homodimer.

Its subcellular location is the cytoplasm. It catalyses the reaction dUMP + (6R)-5,10-methylene-5,6,7,8-tetrahydrofolate = 7,8-dihydrofolate + dTMP. The protein operates within pyrimidine metabolism; dTTP biosynthesis. Catalyzes the reductive methylation of 2'-deoxyuridine-5'-monophosphate (dUMP) to 2'-deoxythymidine-5'-monophosphate (dTMP) while utilizing 5,10-methylenetetrahydrofolate (mTHF) as the methyl donor and reductant in the reaction, yielding dihydrofolate (DHF) as a by-product. This enzymatic reaction provides an intracellular de novo source of dTMP, an essential precursor for DNA biosynthesis. This Aromatoleum aromaticum (strain DSM 19018 / LMG 30748 / EbN1) (Azoarcus sp. (strain EbN1)) protein is Thymidylate synthase.